We begin with the raw amino-acid sequence, 566 residues long: F-box/WD repeat-containing protein 5 (566 aa).

Positions 3–49 (EGGTPLLPDSLVYQIFLSLGPADVLAAGLVCRQWQAVSRDEFLWREQ) constitute an F-box domain. WD repeat units follow at residues 83–125 (VEVQ…DLTI), 126–178 (SLLH…LDSF), 179–238 (ALLS…VKRL), and 239–281 (FKIQ…RIFD). At serine 151 the chain carries Phosphoserine; by PLK4. Residue serine 284 is modified to Phosphoserine. Positions 303–311 (RHFLDRVLE) match the D-box motif. WD repeat units lie at residues 394–447 (ALDH…DLLV), 458–501 (RALR…RHYN), and 502–539 (ICLA…KAWR).

This sequence belongs to the FBXW5 family. In terms of assembly, part of the SCF (SKP1-CUL1-F-box) E3 ubiquitin-protein ligase complex SCF(FBXW5) composed of CUL1, SKP1, RBX1 and FBXW5. Component of the DCX(FBXW5) E3 ubiquitin ligase complex, at least composed of (CUL4A or CUL4B), DDB1, FBXW5 and RBX1. Interacts with CDC20, EPS8, TSC1, TSC2 and SASS6. Interacts with TNFAIP8L1; TNFAIP8L1 competes with TSC2 to bind FBXW5 increasing TSC2 stability by preventing its ubiquitination. Post-translationally, phosphorylated at Ser-151 by PLK4 during the G1/S transition, leading to inhibit its ability to ubiquitinate SASS6. In terms of processing, ubiquitinated and degraded by the APC/C complex during mitosis and G1 phase.

Its subcellular location is the cytoplasm. Its pathway is protein modification; protein ubiquitination. Functionally, substrate recognition component of both SCF (SKP1-CUL1-F-box protein) and DCX (DDB1-CUL4-X-box) E3 ubiquitin-protein ligase complexes. Substrate recognition component of the SCF(FBXW5) E3 ubiquitin-protein ligase complex which mediates the ubiquitination and subsequent proteasomal degradation of SASS6 during S phase, leading to prevent centriole reduplication. The SCF(FBXW5) complex also mediates ubiquitination and degradation of actin-regulator EPS8 during G2 phase, leading to the transient degradation of EPS8 and subsequent cell shape changes required to allow mitotic progression. Substrate-specific adapter of the DCX(FBXW5) E3 ubiquitin-protein ligase complex which mediates the polyubiquitination and subsequent degradation of TSC2. May also act as a negative regulator of MAP3K7/TAK1 signaling in the interleukin-1B (IL1B) signaling pathway. This Homo sapiens (Human) protein is F-box/WD repeat-containing protein 5 (FBXW5).